A 213-amino-acid chain; its full sequence is Imidazole glycerol phosphate synthase subunit HisH 1 (213 aa).

A Glutamine amidotransferase type-1 domain is found at 4 to 213 (TVAVIDYGMG…QNFVAWDGRW (210 aa)). Residue C82 is the Nucleophile of the active site. Active-site residues include H191 and E193.

As to quaternary structure, heterodimer of HisH and HisF.

It is found in the cytoplasm. It catalyses the reaction 5-[(5-phospho-1-deoxy-D-ribulos-1-ylimino)methylamino]-1-(5-phospho-beta-D-ribosyl)imidazole-4-carboxamide + L-glutamine = D-erythro-1-(imidazol-4-yl)glycerol 3-phosphate + 5-amino-1-(5-phospho-beta-D-ribosyl)imidazole-4-carboxamide + L-glutamate + H(+). It carries out the reaction L-glutamine + H2O = L-glutamate + NH4(+). Its pathway is amino-acid biosynthesis; L-histidine biosynthesis; L-histidine from 5-phospho-alpha-D-ribose 1-diphosphate: step 5/9. Its function is as follows. IGPS catalyzes the conversion of PRFAR and glutamine to IGP, AICAR and glutamate. The HisH subunit provides the glutamine amidotransferase activity that produces the ammonia necessary to HisF for the synthesis of IGP and AICAR. The sequence is that of Imidazole glycerol phosphate synthase subunit HisH 1 (hisH1) from Pseudomonas aeruginosa (strain ATCC 15692 / DSM 22644 / CIP 104116 / JCM 14847 / LMG 12228 / 1C / PRS 101 / PAO1).